The primary structure comprises 66 residues: Cytoplasmic envelopment protein 3 (66 aa).

The N-myristoyl glycine; by host moiety is linked to residue Gly2.

This sequence belongs to the herpesviridae cytoplasmic envelopment protein 3 family. As to quaternary structure, interacts with cytoplasmic envelopment protein 2; this interaction is essential for the proper localization of each protein to the assembly complex and thus for the production of infectious virus. Post-translationally, phosphorylated. Phosphorylation does not seem to be required for recycling to the host Golgi apparatus. Packaging is selective for underphosphorylated forms.

The protein localises to the virion tegument. It is found in the virion membrane. It localises to the host cell membrane. Its subcellular location is the host Golgi apparatus membrane. In terms of biological role, plays an important role in the cytoplasmic envelopment of tegument proteins and capsids during the assembly and egress processes. Also participates in viral entry at the fusion step probably by regulating the core fusion machinery. This Saimiriine herpesvirus 2 (strain 11) (SaHV-2) protein is Cytoplasmic envelopment protein 3 (38).